Reading from the N-terminus, the 422-residue chain is 4-hydroxy-3-methylbut-2-en-1-yl diphosphate synthase (flavodoxin) (422 aa).

Cys316, Cys319, Cys362, and Glu369 together coordinate [4Fe-4S] cluster.

Belongs to the IspG family. The cofactor is [4Fe-4S] cluster.

It catalyses the reaction (2E)-4-hydroxy-3-methylbut-2-enyl diphosphate + oxidized [flavodoxin] + H2O + 2 H(+) = 2-C-methyl-D-erythritol 2,4-cyclic diphosphate + reduced [flavodoxin]. Its pathway is isoprenoid biosynthesis; isopentenyl diphosphate biosynthesis via DXP pathway; isopentenyl diphosphate from 1-deoxy-D-xylulose 5-phosphate: step 5/6. In terms of biological role, converts 2C-methyl-D-erythritol 2,4-cyclodiphosphate (ME-2,4cPP) into 1-hydroxy-2-methyl-2-(E)-butenyl 4-diphosphate. The polypeptide is 4-hydroxy-3-methylbut-2-en-1-yl diphosphate synthase (flavodoxin) (Ehrlichia ruminantium (strain Gardel)).